We begin with the raw amino-acid sequence, 313 residues long: tRNA dimethylallyltransferase (313 aa).

Position 17 to 24 (17 to 24 (GPTASGKT)) interacts with ATP. Position 19–24 (19–24 (TASGKT)) interacts with substrate. Interaction with substrate tRNA stretches follow at residues 42 to 45 (DSAL), 166 to 170 (QRLSR), 247 to 252 (RCVGYR), and 280 to 287 (KRQITWLR).

The protein belongs to the IPP transferase family. Monomer. The cofactor is Mg(2+).

The enzyme catalyses adenosine(37) in tRNA + dimethylallyl diphosphate = N(6)-dimethylallyladenosine(37) in tRNA + diphosphate. In terms of biological role, catalyzes the transfer of a dimethylallyl group onto the adenine at position 37 in tRNAs that read codons beginning with uridine, leading to the formation of N6-(dimethylallyl)adenosine (i(6)A). The protein is tRNA dimethylallyltransferase of Proteus mirabilis (strain HI4320).